The primary structure comprises 822 residues: Structure-specific endonuclease subunit SLX4 (822 aa).

Disordered stretches follow at residues 1–39, 73–117, 277–362, 390–418, 456–507, and 589–676; these read MSHL…PSAS, TPAV…PRPL, GTTN…GVSD, RVSS…TSVS, KSHE…SGQL, and KNSA…QASS. Residues 13–39 are compositionally biased toward polar residues; that stretch reads SPSPSQIFGSSTTPVATNSTHSEPSAS. Over residues 280 to 294 the composition is skewed to low complexity; the sequence is NSSSSEGSSNKSSGK. The segment covering 310-320 has biased composition (polar residues); that stretch reads VTTITSLSTAQ. Residues 342–354 show a composition bias toward basic residues; the sequence is GKRSKSQTKKGGN. A compositionally biased stretch (low complexity) spans 460–470; that stretch reads SSTLTLPSTST. Residues 471-484 are compositionally biased toward polar residues; that stretch reads NASNQGFSSQNTIN. Over residues 490 to 506 the composition is skewed to low complexity; it reads SQTTSTTTESTGVESGQ. The span at 589 to 612 shows a compositional bias: polar residues; sequence KNSAPTSLPANNANPPDSHASGQK. Residues 627 to 636 show a composition bias toward basic residues; it reads TTKRASKAPQ. Over residues 637 to 650 the composition is skewed to low complexity; the sequence is KKQSTSSTSHSAKA.

The protein belongs to the SLX4 family. As to quaternary structure, forms a heterodimer with SLX1. In terms of processing, phosphorylated in response to DNA damage.

It localises to the nucleus. Regulatory subunit of the SLX1-SLX4 structure-specific endonuclease that resolves DNA secondary structures generated during DNA repair and recombination. Has endonuclease activity towards branched DNA substrates, introducing single-strand cuts in duplex DNA close to junctions with ss-DNA. The protein is Structure-specific endonuclease subunit SLX4 of Coccidioides immitis (strain RS) (Valley fever fungus).